Consider the following 227-residue polypeptide: Ribonuclease 3 (227 aa).

The region spanning 3 to 130 (TNAISKIIKY…LIGAIYLDGG (128 aa)) is the RNase III domain. Glu43 lines the Mg(2+) pocket. Asp47 is a catalytic residue. Positions 116 and 119 each coordinate Mg(2+). Glu119 is a catalytic residue. Residues 155–224 (DAKTILQEWA…ASLMLAKINY (70 aa)) enclose the DRBM domain.

This sequence belongs to the ribonuclease III family. In terms of assembly, homodimer. Requires Mg(2+) as cofactor.

The protein localises to the cytoplasm. The catalysed reaction is Endonucleolytic cleavage to 5'-phosphomonoester.. Its function is as follows. Digests double-stranded RNA. Involved in the processing of primary rRNA transcript to yield the immediate precursors to the large and small rRNAs (23S and 16S). Processes some mRNAs, and tRNAs when they are encoded in the rRNA operon. Processes pre-crRNA and tracrRNA of type II CRISPR loci if present in the organism. The chain is Ribonuclease 3 from Ehrlichia ruminantium (strain Welgevonden).